The sequence spans 351 residues: Putative F-box protein At4g09790 (351 aa).

Residues 1-51 (MTTICDLPRDLVARILSRVPLTSMRRVRFTCKRWNTISKDPSFAKTHFGKA) enclose the F-box domain.

This chain is Putative F-box protein At4g09790, found in Arabidopsis thaliana (Mouse-ear cress).